Consider the following 219-residue polypeptide: 7-cyano-7-deazaguanine synthase (219 aa).

Residue 9 to 19 (YSGGMDSFTVL) participates in ATP binding. The Zn(2+) site is built by C185, C193, C196, and C199.

Belongs to the QueC family. It depends on Zn(2+) as a cofactor.

The catalysed reaction is 7-carboxy-7-deazaguanine + NH4(+) + ATP = 7-cyano-7-deazaguanine + ADP + phosphate + H2O + H(+). It functions in the pathway purine metabolism; 7-cyano-7-deazaguanine biosynthesis. Functionally, catalyzes the ATP-dependent conversion of 7-carboxy-7-deazaguanine (CDG) to 7-cyano-7-deazaguanine (preQ(0)). This Marinomonas sp. (strain MWYL1) protein is 7-cyano-7-deazaguanine synthase.